Here is a 150-residue protein sequence, read N- to C-terminus: Large ribosomal subunit protein bL9 (150 aa).

This sequence belongs to the bacterial ribosomal protein bL9 family.

Functionally, binds to the 23S rRNA. The protein is Large ribosomal subunit protein bL9 of Polaromonas naphthalenivorans (strain CJ2).